The sequence spans 4239 residues: MSPMKQNESESHSVSEPIAIIGSAYRFPGGCNTPSKLWDLLRQPRDILKEIDPERLNLRRYYHPDGETHGSTDVANKAYTLEEDISRFDASFFGISPLEAASMDPQQRTLLEVVYESTETAGIPLDKLRGSLTSVHVGVMTTDWAQMQRRDPETMPQYTATGIASSIISNRISYIFDLKGASETIDTACSSSLVALHNAARALQSGDCEKAIVAGVNLILDPDPFIYESKLHMLSPDARSRMWDAAANGYARGEGAAAVVLKTLGHALRDGDRIEGVIRSTFVNSDGLSSGLTMPSSAAQTALIRQTYRKAGLDPVRDRPQFFECHGTGTKAGDPVEARAISDAFLPPSHRTNGAATTVDAPLYVGSIKTVVGHLEGCAGLAGLVKVLLSLKHGIIPPNLWFDKLNPEIARYYGPLQIPTKAIPWPKLAPGTPLRASVNSFGFGGTNAHAIIERYDASQSYCSQWRRNMTEEKTIARTQNNESIEIPVPLVLTAKTGRALWRTVDAYAQHLRQHPKLRVTNLSQFMHSRRSTHRVRASFSGASREELVENMAKFVQAHAADAKSPASQNRIGYSPLHIDPKEAPGILGVFTGQGAQWPAMGRDMMHQSPLFRKTIADCESVLQALPAKDAPVWSLSEELKKDASTSRLGEAEISQPLCTAVQLALVNVLLASGVHFDAVVGHSSGEIAATYASGIINLEAAMQIAYYRGLYAKLARGETDAAGGMMAAGLSMNDAVKLCRLPEFEGRIHVAASNAPQSVTLSGDKEAIKAAKAKLDADGVFARELKVDTAYHSHHMLPCAEPYLKALLACDIQVSAPTTTPGRKCMWSSSVRGDAELLRHDRNLDSLKGPYWVANMVQTVLFSRAVQSTIWHGGPFDLAVEVGPHPALKGPTEQTLKAVYGSAPLYTGVLSRGANDAVAFSTAIGNIWSHLGPAFVDITGYQSIFSSTCEGHGGGSAAPFISDLPLYPWDHDEEYWRESRISRRHRTGKDESHELLGRRTPDDNEREIRWRNLLKVSELPWTQGHRVLGEVLLPGAAYISMAIEAGRRLALDQGREARLLEVSDVDILRPVVVADNKEGTETLFTVRLLDEYASTGKKSDELITASFSFYIYNSPASTSIVHTCEGRIAVQLGAKLGSEAGANSMPQLPHREPSISNLQQLDCEKLYSVFETIGLEYSGAFRRIVSSSRCLGHATATASWPTTDLNDCYLIHPAILDVAFQTIFVARAHPDSGQLSSALLPSRIERVRVVPSLAMGSKLQNNENFNAAIDSWALNQTASSLTGNINVYDAESGRALIQVEGFEVRAVGEPDASKDRLLFYETVWGRDISIMGLSDPIRDETSDAMVHNLSEAIERVSLFYVRQLMGELSTADRRQANWYHTRMLAAFDYHLAKVHEETHLHLRPEWLADDWAVIQTIDEAYPDAVELQMLHAVGQNVADVIRGKKHLLEVLRVDNLLDRLYTEDKGMHMANLFLANALEEITFKFPRCKILEIGAGTGATTWAALSAIGEAFDTYTYTDLSVGFFENAVERFSAFRHRMVFRALDIEKDPASQSFDLNSYDIIIATNVLHATRNLGVTLGNVRALLKPGGYLLLNEKTGPESLRATFNFGGLEGWWLAEEKERQLSPLMSPDGWDAQLQKASFSGVDHIVHDVQEDQQDKQQNSMIMSQAVDDTFYARLSPLSEMANLLPMNEPLLIIGGQTTATLKMIKEIQKLLPRQWRHKVRLIASVDHVEAEGLPAHSDVICLQELDRGLFTTAMTSKCLDALKTLFINTRNLLWVTNAQNSSSMTPRASMFRGITRVLDGEVPHIRTQVLGIEPRETPSATARTLLEAFLRLRSDDGRHAGNVDEDGADGSSQQVLWLHEPEAELLSNGTMMVPRVKARKSLNDTYLASTRAISTTVDARCVSVQAVAGPAKMLLRPVEDFAGEHAISNQTSDSKVHIQVESTLHIPEALDGTCLYLVCGWTRTAETSVPVIALSANNASMVAVESKAVAMIDEVDVKPETLLRVFQHMAMQALDSAVKRHGQGQSTALIYGADEELAKLTSERFAVRESKVYFASSRTFAPGDWLKVQPLLSKFALSQMIPADVEVFIDCLGDTESFDACRTLQSCLSTTRTVQHRLDACLLSQMSRCSPDALVDAYSYAKTQSNAEFSWNGYVKTFTAAELAGKLSHSLIHSVYMTNWQKKDSILVTVPPLQTRGLFKSDRTYLMVGAAGGLGTSICRWMVRNGARHVVVTSRNPKADPEMLNEAERYGAAVQVVPMDACSKDSVQTVVDMIRATMPPIAGVCNAAMVLRDKLFLDMNVDHMKDVLGPKMQGTEHLDSIFAQEPLDFFVLLSSSAAILNNTGQSNYHCANLYMDSLVTNRRSRGLAASIIHVGHVCDTGYVARLVDDTKVQMSLGTTRVMSVSETDVHHAFAEAVRGGQPDSRSGSHNIIMGIEPPTKPLDLTKRKPVWISDPRLGPCLPFSTLENQMMASEQAAAASAVDSLAQQVSEATTDEEAAVAALKGFATKLEGILLLPLGSIGEDSAGRPVTDLGIDSLVAVEIRTWFLKQLRVDVPVMKILGGSTVGQLSALAAKLARQDAKKRAQLEEPSGNQPVALPSPPPKDKAGGLNKNGKSPKLPEIAQVDTVVERMEPLVLEASDRGGSSTANLTTSSSVSELDDSLHESTLQSSDNNGESTPSKSSNCNSDSGSDNQAPKEIPSNGFFTQPAATARPNVLREAPMSPAQSRIWFLSKHIAEPDAYNMVFHYRVRGPLSMVRLRHALQTVTNHHECLCMCFYASADNGQPMQGLLASSAFQMTHVPGGEEQDVQRELRKLKTRVWSVESGQTLELVVLGPRPGTAAAAEEEEEEFSLLFGYHHIVMDAISFYIFLADLDKAYRMLPLDKASAGSHLDLAAHQRQQERAGAWEESLEFWRAEFETIPEMLPSLSVALPTLHRGAVGTHRVLRELAHEQGGDAAIKKMCKHLRVSPFNLHIAVLQVVIARLASIEDVCVGIVDANRSDSRASRMVGCFVNMLPVRSRILPTATLADVARAASSKALAAFAHGQVPLDSILDKVKAPRPAGSTPLFQVALNYRPAAAIASKQALGGECEMELLADDFKDAENPFEISVLVSEMSGGRIAVEVVCQKSRYTMQATEALLDAYLNVLAGFLSDSAQSVGDCVVHDQSKVEHALDLGRGAQKSFGWPRTLSERVMSICQQHSTKSAIKDGRNELSYAQLASRVNRTASAILGTGCSVGSRIAVLCNPSIDAIVAMLAILHIGGVYVPLDTSLPEARHQSLASNCTPSLIISHAATRERAHKLSAAISAPGHEPARELTLDDLSPPEETGYMAPLNAEPNAPAILLYTSGSTGTPKGVLLTQANFGNHIALKTDILGLQRGECVLQQSSLGFDMSLVQVFCALANGGCLVIVRQDVRRDPVELTTLMTQHKVSLTIATPSEYLAWLQYGSDALAQATSWKNLCMGGEPIPPLLKDELRRRLERKDLVVTNCYGPTETTAAISFQSVALDSEHGHELPGESELAQYAVGKALPNYSIRIRDSAGGAWLPVNHTGEIVIGGAGVALGYLDMPEETRARFLQTPGEEDGMMLYRTGDKGRLLSDGTLLCFGRITGDYQVKLRGLRIELGEVEAALLQASHGLIHTAVVSRRGDVLVAHCARSHESSRETTGGGEQQDATAILRRVSELLPQYSVPAAIALLPSLPTNANGKLDRKAIAALPLSPQDEAAAATSPSNNNINNNTPSGGGGEKMTVRQGELRLLWERVLPRDAATTTTNSVRITPESDFFLRGGNSLLLMKLQAAIRESMGVRVSTKALYQASTLSGMARCVAEQRSDDDEAEEDIDWAAEVAVPPSMLAQIEKLQHSSASSSSSSSSSSSAGSSSTQRPRKTSGLEILLTGATGFLGGQLLERLVQSPRVSTVHCVAVPVDEQSLLEPFLQQQADGTRRKVRCYIGNLAAPALGLTAADQTALSQTADVIVHAGSMGHCLNTYATLAAPNFASTRHLCSLALSRSPPIPLAFASSNRVALLTGSTAPPPASAAAFPPPPGAQGFTASKWASEAFLEKLAASIMTSKTKSTTTTTTTTVPWRVSIHRPCALISDRAPNSDALNAILRYSTSMRCVPSLPEHRAEGYLDFGQVDKVVEEMVGDILGLADERQQEGPAVVYRHHSGGVKVPIHEFREHMESVYGGRFESVELGQWIVRAVDAGMDPLISAYLETFLEGDASMVFPYMGEQAV.

The region spanning 15-454 is the Ketosynthase family 3 (KS3) domain; the sequence is SEPIAIIGSA…GTNAHAIIER (440 aa). Residues C189, H326, and H374 each act as for beta-ketoacyl synthase activity in the active site. A malonyl-CoA:ACP transacylase (MAT) domain region spans residues 589 to 923; it reads VFTGQGAQWP…ANDAVAFSTA (335 aa). An N-terminal hotdog fold region spans residues 993 to 1135; sequence HELLGRRTPD…GRIAVQLGAK (143 aa). Residues 993 to 1310 form a dehydratase (DH) domain region; that stretch reads HELLGRRTPD…GFEVRAVGEP (318 aa). The region spanning 993 to 1313 is the PKS/mFAS DH domain; sequence HELLGRRTPD…VRAVGEPDAS (321 aa). Catalysis depends on H1025, which acts as the Proton acceptor; for dehydratase activity. The C-terminal hotdog fold stretch occupies residues 1158–1313; that stretch reads LQQLDCEKLY…VRAVGEPDAS (156 aa). The active-site Proton donor; for dehydratase activity is D1217. The segment at 1459 to 1652 is methyltransferase (MT) domain; sequence RLYTEDKGMH…FSGVDHIVHD (194 aa). Residues 2209–2382 form a ketoreductase (KR) domain region; the sequence is TYLMVGAAGG…AASIIHVGHV (174 aa). Residues 2502–2582 enclose the Carrier 1 domain; it reads EAAVAALKGF…QLSALAAKLA (81 aa). Residue S2542 is modified to O-(pantetheine 4'-phosphoryl)serine. Disordered stretches follow at residues 2587–2629 and 2642–2712; these read KKRA…EIAQ and LEAS…FFTQ. 2 stretches are compositionally biased toward polar residues: residues 2648-2662 and 2670-2681; these read GGSS…SSVS and ESTLQSSDNNGE. Residues 2682-2698 show a composition bias toward low complexity; the sequence is STPSKSSNCNSDSGSDN. Residues 2723–3169 form a condensation (C) domain region; the sequence is REAPMSPAQS…SAQSVGDCVV (447 aa). The segment at 3203-3614 is adenylation (A) (KR) domain; the sequence is CQQHSTKSAI…DGTLLCFGRI (412 aa). Positions 3728-3752 are disordered; that stretch reads EAAAATSPSNNNINNNTPSGGGGEK. Over residues 3729–3745 the composition is skewed to low complexity; the sequence is AAAATSPSNNNINNNTP. The Carrier 2 domain maps to 3751 to 3835; it reads EKMTVRQGEL…GMARCVAEQR (85 aa). S3795 bears the O-(pantetheine 4'-phosphoryl)serine mark. Residues 3862-3892 are disordered; that stretch reads EKLQHSSASSSSSSSSSSSAGSSSTQRPRKT. The span at 3867 to 3885 shows a compositional bias: low complexity; the sequence is SSASSSSSSSSSSSAGSSS. Positions 3899 to 4145 are reductase (RED) domain; that stretch reads LTGATGFLGG…LDFGQVDKVV (247 aa).

The protein in the C-terminal section; belongs to the NRP synthetase family.

It participates in secondary metabolite biosynthesis. Hybrid PKS-NRPS synthetase; part of the gene cluster that mediates the biosynthesis of tenellin-type 2-pyridones, iron-chelating compounds involved in iron stress tolerance, competition with the natural competitor fungus Metarhizium robertsii and insect hosts infection. TenS catalyzes the assembly of the polyketide-amino acid backbone. Because tenS lacks a designated enoylreductase (ER) domain, the required activity is provided the enoyl reductase tenC. Upon formation of the polyketide backbone on the thiotemplate, the triketide is transferred to the NRPS module and linked to tyrosine to produce the pyrrolidine-2-dione intermediates, including pretellinin A, 11-hydropretellenin A, 12-hydropretellenin A, 13-hydropretellenin A, 14-hydropretellenin A, 12-oxopretellenin A and prototellinin D. The pathway begins with the assembly of the polyketide-amino acid backbone by the hybrid PKS-NRPS tenS with the help of the enoyl reductase tenC. These enzymes catalyze the synthesis of the pyrrolidine-2-dione intermediates pretellinin A, 11-hydropretellenin A, 12-hydropretellenin A, 13-hydropretellenin A, 14-hydropretellenin A, 12-oxopretellenin A and prototellinin D. The cytochrome P450 monooxygenase tenA then catalyzes an oxidative ring expansion of pretenellin A and 14-hydropretellenin A to form the 2-pyridone core, leading to pretenellin B and pyridovericin, respectively. The cytochrome P450 monooxygenase tenB is then required for the selective N-hydroxylation of the 2-pyridone nitrogen of yield tellinin and 15-hydroxytellenin (15-HT), respectively. The UDP-glucosyltransferase GT1 and the methyltransferase MT1, located outside the tenS gene cluster, contribute to the stepwise glycosylation and methylation of 15-HT to obtain the glycoside pyridovericin-N-O-(4-O-methyl-beta-D-glucopyranoside) (PMGP). Additional related compounds such as 1-O-methyl-15-HT, (8Z)-1-O-methyl-15-HT, and O-methyltenellin A are also produced but the enzymes involved in their biosynthesis have still to be determined. In Beauveria bassiana (White muscardine disease fungus), this protein is Tenellin synthetase.